A 119-amino-acid polypeptide reads, in one-letter code: Large ribosomal subunit protein bL20 (119 aa).

The protein belongs to the bacterial ribosomal protein bL20 family.

In terms of biological role, binds directly to 23S ribosomal RNA and is necessary for the in vitro assembly process of the 50S ribosomal subunit. It is not involved in the protein synthesizing functions of that subunit. The protein is Large ribosomal subunit protein bL20 of Streptococcus uberis (strain ATCC BAA-854 / 0140J).